A 238-amino-acid polypeptide reads, in one-letter code: Transcriptional activator protein AnoR (238 aa).

Residues 170–236 (EFSQFNLYLT…SAAIRAVMLG (67 aa)) enclose the HTH luxR-type domain. A DNA-binding region (H-T-H motif) is located at residues 195–214 (SAEIAQIIGVTERTVNFHLC).

It belongs to the autoinducer-regulated transcriptional regulatory protein family.

Its function is as follows. Positively regulates the expression of anoI. Required for biofilm formation and motility. Probably part of a quorum-sensing system with AnoI. This is Transcriptional activator protein AnoR from Acinetobacter nosocomialis.